The following is a 270-amino-acid chain: MRIALGIQYDGAAFCGWQSQPHGKTVQDALERSLAEFAQTSLHTTVAGRTDTGVHGLGQVVHFDTDLDRADFSWVRGTNAFLPPTVAVQWAKPMPDTFHARFAAFERTYYYALYVHPVRSPMLAGRAGWVHTPLDVDAMREAAAHLVGEHDFSAFRSSECQAKSPVKHLYQIGIRPDGDFIHFRFRANAFLHHMVRNLMGCLVAVGRGRYPSSWLAEVLESRDRDCAAPTFMPEGLYLAHVGYPAEFAVPPAQLGSVPWSSVWADLDGRT.

D51 acts as the Nucleophile in catalysis. Position 109 (Y109) interacts with substrate.

Belongs to the tRNA pseudouridine synthase TruA family. In terms of assembly, homodimer.

The enzyme catalyses uridine(38/39/40) in tRNA = pseudouridine(38/39/40) in tRNA. Its function is as follows. Formation of pseudouridine at positions 38, 39 and 40 in the anticodon stem and loop of transfer RNAs. The polypeptide is tRNA pseudouridine synthase A (Burkholderia mallei (strain ATCC 23344)).